The chain runs to 515 residues: Bifunctional purine biosynthesis protein PurH (515 aa).

The MGS-like domain maps to 1 to 145 (MTKRALISVS…KNHASVTVVV (145 aa)).

It belongs to the PurH family.

The catalysed reaction is (6R)-10-formyltetrahydrofolate + 5-amino-1-(5-phospho-beta-D-ribosyl)imidazole-4-carboxamide = 5-formamido-1-(5-phospho-D-ribosyl)imidazole-4-carboxamide + (6S)-5,6,7,8-tetrahydrofolate. The enzyme catalyses IMP + H2O = 5-formamido-1-(5-phospho-D-ribosyl)imidazole-4-carboxamide. The protein operates within purine metabolism; IMP biosynthesis via de novo pathway; 5-formamido-1-(5-phospho-D-ribosyl)imidazole-4-carboxamide from 5-amino-1-(5-phospho-D-ribosyl)imidazole-4-carboxamide (10-formyl THF route): step 1/1. It participates in purine metabolism; IMP biosynthesis via de novo pathway; IMP from 5-formamido-1-(5-phospho-D-ribosyl)imidazole-4-carboxamide: step 1/1. This chain is Bifunctional purine biosynthesis protein PurH, found in Streptococcus equi subsp. equi (strain 4047).